We begin with the raw amino-acid sequence, 173 residues long: Peptide methionine sulfoxide reductase MsrA (173 aa).

C10 is a catalytic residue.

The protein belongs to the MsrA Met sulfoxide reductase family.

It catalyses the reaction L-methionyl-[protein] + [thioredoxin]-disulfide + H2O = L-methionyl-(S)-S-oxide-[protein] + [thioredoxin]-dithiol. The enzyme catalyses [thioredoxin]-disulfide + L-methionine + H2O = L-methionine (S)-S-oxide + [thioredoxin]-dithiol. Its function is as follows. Has an important function as a repair enzyme for proteins that have been inactivated by oxidation. Catalyzes the reversible oxidation-reduction of methionine sulfoxide in proteins to methionine. The polypeptide is Peptide methionine sulfoxide reductase MsrA (Acinetobacter baumannii (strain AB307-0294)).